We begin with the raw amino-acid sequence, 210 residues long: Imidazoleglycerol-phosphate dehydratase (210 aa).

Belongs to the imidazoleglycerol-phosphate dehydratase family.

The protein resides in the cytoplasm. It carries out the reaction D-erythro-1-(imidazol-4-yl)glycerol 3-phosphate = 3-(imidazol-4-yl)-2-oxopropyl phosphate + H2O. The protein operates within amino-acid biosynthesis; L-histidine biosynthesis; L-histidine from 5-phospho-alpha-D-ribose 1-diphosphate: step 6/9. In Acidovorax ebreus (strain TPSY) (Diaphorobacter sp. (strain TPSY)), this protein is Imidazoleglycerol-phosphate dehydratase.